The sequence spans 116 residues: Large ribosomal subunit protein uL18 (116 aa).

The protein belongs to the universal ribosomal protein uL18 family. Part of the 50S ribosomal subunit; part of the 5S rRNA/L5/L18/L25 subcomplex. Contacts the 5S and 23S rRNAs.

Its function is as follows. This is one of the proteins that bind and probably mediate the attachment of the 5S RNA into the large ribosomal subunit, where it forms part of the central protuberance. The protein is Large ribosomal subunit protein uL18 of Chromohalobacter salexigens (strain ATCC BAA-138 / DSM 3043 / CIP 106854 / NCIMB 13768 / 1H11).